We begin with the raw amino-acid sequence, 151 residues long: Transcriptional repressor NrdR (151 aa).

The segment at 3–34 is a zinc-finger region; the sequence is CPYCGYIEDRVIDSRPTDEGSAIRRRRECSKC. Positions 49 to 139 constitute an ATP-cone domain; the sequence is IMVIKKDKSR…VYRQFKDINT (91 aa).

It belongs to the NrdR family. The cofactor is Zn(2+).

Functionally, negatively regulates transcription of bacterial ribonucleotide reductase nrd genes and operons by binding to NrdR-boxes. This Acetivibrio thermocellus (strain ATCC 27405 / DSM 1237 / JCM 9322 / NBRC 103400 / NCIMB 10682 / NRRL B-4536 / VPI 7372) (Clostridium thermocellum) protein is Transcriptional repressor NrdR.